A 359-amino-acid chain; its full sequence is MVQASLSSPITPPKDTQALQEWLHQLADRIISGYRITKVEALALTEIEGQDQILLLCEAADRIRQACCGNRVDLCSIINIKSGHCSENCSFCSQSVHHPGQDSPVYGLKTSEEIVQQAKAAAAAGAKRFCLVSQGRGLKYNSPKSKEFAEILATVKRITTEAKIKPCCALGELTLEQAQALKEAGVTRYNHNLEASATFYPQIVTTHTWADRVETVKNLKAAGIQACTGGIIGMGESWEDRIDLALSLRDLEVDSVPINLLNPRQGTPLGHLPKLDPFEALQAIAIFRFILPQQILRYAGGREAIMGELQSLGLKAGINAMLIGHYLTTLGQSPQQDQAMLKSLGLEGGEAPIPGEYQP.

A Radical SAM core domain is found at 67–302; the sequence is CCGNRVDLCS…QQILRYAGGR (236 aa). [4Fe-4S] cluster contacts are provided by cysteine 85, cysteine 89, and cysteine 92. Residues cysteine 130, cysteine 167, cysteine 227, and arginine 297 each contribute to the [2Fe-2S] cluster site.

Belongs to the radical SAM superfamily. Biotin synthase family. Homodimer. The cofactor is [4Fe-4S] cluster. Requires [2Fe-2S] cluster as cofactor.

The catalysed reaction is (4R,5S)-dethiobiotin + (sulfur carrier)-SH + 2 reduced [2Fe-2S]-[ferredoxin] + 2 S-adenosyl-L-methionine = (sulfur carrier)-H + biotin + 2 5'-deoxyadenosine + 2 L-methionine + 2 oxidized [2Fe-2S]-[ferredoxin]. It participates in cofactor biosynthesis; biotin biosynthesis; biotin from 7,8-diaminononanoate: step 2/2. Catalyzes the conversion of dethiobiotin (DTB) to biotin by the insertion of a sulfur atom into dethiobiotin via a radical-based mechanism. The protein is Biotin synthase of Gloeothece citriformis (strain PCC 7424) (Cyanothece sp. (strain PCC 7424)).